Consider the following 487-residue polypeptide: Polyamine oxidase 4 (487 aa).

E53, R61, V242, and E429 together coordinate FAD. The short motif at 485-487 is the Microbody targeting signal element; sequence CRT.

This sequence belongs to the flavin monoamine oxidase family. FAD serves as cofactor. As to expression, widely expressed.

It is found in the peroxisome. The catalysed reaction is spermine + O2 + H2O = 3-aminopropanal + spermidine + H2O2. It carries out the reaction norspermine + O2 + H2O = norspermidine + 3-aminopropanal + H2O2. The enzyme catalyses thermospermine + O2 + H2O = 3-aminopropanal + spermidine + H2O2. It participates in amine and polyamine degradation; spermine degradation. Its function is as follows. Flavoenzyme involved in polyamine back-conversion. Catalyzes the oxidation of the secondary amino group of polyamines, such as spermine. Substrate preference is spermine &gt; thermospermine &gt; norspermine. No activity detected when putrescine, spermidine or N(1)-acetylspermidine are used as substrates. Plays an important role in the regulation of polyamine intracellular concentration. The chain is Polyamine oxidase 4 from Oryza sativa subsp. japonica (Rice).